A 315-amino-acid polypeptide reads, in one-letter code: Putative methyltransferase SPBC8D2.16c (315 aa).

Belongs to the class IV-like SAM-binding methyltransferase superfamily.

The protein localises to the cytoplasm. The protein resides in the nucleus. This Schizosaccharomyces pombe (strain 972 / ATCC 24843) (Fission yeast) protein is Putative methyltransferase SPBC8D2.16c.